The chain runs to 90 residues: UPF0297 protein Cthe_0151 (90 aa).

Belongs to the UPF0297 family.

The chain is UPF0297 protein Cthe_0151 from Acetivibrio thermocellus (strain ATCC 27405 / DSM 1237 / JCM 9322 / NBRC 103400 / NCIMB 10682 / NRRL B-4536 / VPI 7372) (Clostridium thermocellum).